Reading from the N-terminus, the 457-residue chain is Glutamate--tRNA ligase 1 (457 aa).

Positions 9–19 match the 'HIGH' region motif; the sequence is PSPTGYIHIGN. The 'KMSKS' region motif lies at 250–254; the sequence is GLSKR. Residue Lys-253 participates in ATP binding.

Belongs to the class-I aminoacyl-tRNA synthetase family. Glutamate--tRNA ligase type 1 subfamily. Monomer.

The protein resides in the cytoplasm. The enzyme catalyses tRNA(Glu) + L-glutamate + ATP = L-glutamyl-tRNA(Glu) + AMP + diphosphate. Catalyzes the attachment of glutamate to tRNA(Glu) in a two-step reaction: glutamate is first activated by ATP to form Glu-AMP and then transferred to the acceptor end of tRNA(Glu). This Brucella canis (strain ATCC 23365 / NCTC 10854 / RM-666) protein is Glutamate--tRNA ligase 1.